The following is a 257-amino-acid chain: Phycoerythrobilin:ferredoxin oxidoreductase (257 aa).

It belongs to the HY2 family.

The enzyme catalyses (3Z)-phycoerythrobilin + oxidized 2[4Fe-4S]-[ferredoxin] = 15,16-dihydrobiliverdin + reduced 2[4Fe-4S]-[ferredoxin] + 2 H(+). Functionally, catalyzes the two-electron reduction of the C2 and C3(1) diene system of 15,16-dihydrobiliverdin. The sequence is that of Phycoerythrobilin:ferredoxin oxidoreductase (pebB) from Synechococcus sp. (strain WH8020).